Here is a 168-residue protein sequence, read N- to C-terminus: Small ribosomal subunit protein uS5 (168 aa).

Residues 12 to 75 (YQEKLVSVTR…DQAKKNMVYI (64 aa)) enclose the S5 DRBM domain.

Belongs to the universal ribosomal protein uS5 family. In terms of assembly, part of the 30S ribosomal subunit. Contacts proteins S4 and S8.

With S4 and S12 plays an important role in translational accuracy. Its function is as follows. Located at the back of the 30S subunit body where it stabilizes the conformation of the head with respect to the body. The polypeptide is Small ribosomal subunit protein uS5 (Legionella pneumophila (strain Paris)).